An 875-amino-acid polypeptide reads, in one-letter code: Alanine--tRNA ligase (875 aa).

A disordered region spans residues 426–445; sequence ERSRKNTVKNKNDSDSIFQD. Zn(2+)-binding residues include H561, H565, C663, and H667.

This sequence belongs to the class-II aminoacyl-tRNA synthetase family. The cofactor is Zn(2+).

The protein localises to the cytoplasm. It carries out the reaction tRNA(Ala) + L-alanine + ATP = L-alanyl-tRNA(Ala) + AMP + diphosphate. In terms of biological role, catalyzes the attachment of alanine to tRNA(Ala) in a two-step reaction: alanine is first activated by ATP to form Ala-AMP and then transferred to the acceptor end of tRNA(Ala). Also edits incorrectly charged Ser-tRNA(Ala) and Gly-tRNA(Ala) via its editing domain. The sequence is that of Alanine--tRNA ligase from Chlamydia muridarum (strain MoPn / Nigg).